Here is a 512-residue protein sequence, read N- to C-terminus: 2,3-bisphosphoglycerate-independent phosphoglycerate mutase (512 aa).

Residues Asp-11 and Ser-61 each coordinate Mn(2+). The active-site Phosphoserine intermediate is the Ser-61. Substrate-binding positions include His-122, 152–153 (RD), Arg-184, Arg-190, 259–262 (RADR), and Lys-332. Mn(2+) contacts are provided by Asp-399, His-403, Asp-440, His-441, and His-459.

Belongs to the BPG-independent phosphoglycerate mutase family. In terms of assembly, monomer. The cofactor is Mn(2+).

It catalyses the reaction (2R)-2-phosphoglycerate = (2R)-3-phosphoglycerate. The protein operates within carbohydrate degradation; glycolysis; pyruvate from D-glyceraldehyde 3-phosphate: step 3/5. In terms of biological role, catalyzes the interconversion of 2-phosphoglycerate and 3-phosphoglycerate. The sequence is that of 2,3-bisphosphoglycerate-independent phosphoglycerate mutase from Francisella philomiragia subsp. philomiragia (strain ATCC 25017 / CCUG 19701 / FSC 153 / O#319-036).